Reading from the N-terminus, the 336-residue chain is CMP-sialic acid transporter (336 aa).

The Cytoplasmic portion of the chain corresponds to 1–9 (MAQARENVS). The helical transmembrane segment at 10-30 (LFFKLYCLAVMTLVAAAYTVA) threads the bilayer. The Lumenal segment spans residues 31-45 (LRYTRTTAKELYFST). Residues 46–64 (TAVCVTEVIKLLISVGLLA) form a helical membrane-spanning segment. Residue lysine 55 coordinates CMP-N-acetyl-beta-neuraminate. Residues 65–87 (KETGSLGRFKASLSENVLGSPKE) are Cytoplasmic-facing. Residues 88–108 (LMKLSVPSLVYAVQNNMAFLA) form a helical membrane-spanning segment. A CMP-N-acetyl-beta-neuraminate-binding site is contributed by 101–102 (QN). The Lumenal portion of the chain corresponds to 109-114 (LSNLDA). A helical transmembrane segment spans residues 115–135 (AVYQVTYQLKIPCTALCTVLM). 117–124 (YQVTYQLK) is a CMP-N-acetyl-beta-neuraminate binding site. The Cytoplasmic segment spans residues 136-141 (LNRTLS). A helical transmembrane segment spans residues 142–160 (KLQWVSVFMLCGGVILVQW). Topologically, residues 161-175 (KPAQATKVVVEQSPL) are lumenal. Residues 176–196 (LGFGAIAIAVLCSGFAGVYFE) form a helical membrane-spanning segment. CMP-N-acetyl-beta-neuraminate is bound at residue serine 188. Residues 197 to 209 (KVLKSSDTSLWVR) lie on the Cytoplasmic side of the membrane. 210–214 (NIQMY) provides a ligand contact to CMP-N-acetyl-beta-neuraminate. Residues 210–228 (NIQMYLSGIVVTLVGTYLS) traverse the membrane as a helical segment. The Lumenal segment spans residues 229–243 (DGAEIKEKGFFYGYT). The chain crosses the membrane as a helical span at residues 244–262 (YYVWFVIFLASVGGLYTSV). Residues 263–269 (VVKYTDN) lie on the Cytoplasmic side of the membrane. The chain crosses the membrane as a helical span at residues 270–288 (IMKGFSAAAAIVLSTIASV). Lysine 272 lines the CMP-N-acetyl-beta-neuraminate pocket. Residues 289–296 (MLFGLQIT) lie on the Lumenal side of the membrane. A helical membrane pass occupies residues 297 to 315 (LSFAMGALLVCISIYLYGL). The Cytoplasmic portion of the chain corresponds to 316–336 (PRQDTTCIQQEATSKERVIGV). Positions 316-336 (PRQDTTCIQQEATSKERVIGV) are disordered.

This sequence belongs to the nucleotide-sugar transporter family. SLC35A subfamily. In terms of assembly, monomer.

The protein resides in the golgi apparatus membrane. The enzyme catalyses CMP-N-acetyl-beta-neuraminate(in) + CMP(out) = CMP-N-acetyl-beta-neuraminate(out) + CMP(in). The catalysed reaction is CMP-N-acetyl-beta-neuraminate(in) + AMP(out) = CMP-N-acetyl-beta-neuraminate(out) + AMP(in). It catalyses the reaction CDP-L-ribitol(in) + CDP(out) = CDP-L-ribitol(out) + CDP(in). It carries out the reaction UMP(out) + CMP-N-acetyl-beta-neuraminate(in) = UMP(in) + CMP-N-acetyl-beta-neuraminate(out). Transports CMP-sialic acid from the cytosol into the Golgi apparatus, functioning as an antiporter that exchanges CMP-sialic acid for CMP. Binds both CMP-sialic acid and free CMP, but has higher affinity for free CMP. Also able to exchange CMP-sialic acid for AMP and UMP. Also mediates the transport of CDP-ribitol. The polypeptide is CMP-sialic acid transporter (SLC35A1) (Cricetulus griseus (Chinese hamster)).